Consider the following 307-residue polypeptide: Aspartate carbamoyltransferase catalytic subunit (307 aa).

Carbamoyl phosphate-binding residues include Arg-58 and Thr-59. An L-aspartate-binding site is contributed by Lys-86. Carbamoyl phosphate contacts are provided by Arg-108, His-136, and Gln-139. Residues Arg-169 and Arg-223 each coordinate L-aspartate. Carbamoyl phosphate-binding residues include Gly-264 and Pro-265.

Belongs to the aspartate/ornithine carbamoyltransferase superfamily. ATCase family. Heterododecamer (2C3:3R2) of six catalytic PyrB chains organized as two trimers (C3), and six regulatory PyrI chains organized as three dimers (R2).

The enzyme catalyses carbamoyl phosphate + L-aspartate = N-carbamoyl-L-aspartate + phosphate + H(+). It participates in pyrimidine metabolism; UMP biosynthesis via de novo pathway; (S)-dihydroorotate from bicarbonate: step 2/3. Its function is as follows. Catalyzes the condensation of carbamoyl phosphate and aspartate to form carbamoyl aspartate and inorganic phosphate, the committed step in the de novo pyrimidine nucleotide biosynthesis pathway. The protein is Aspartate carbamoyltransferase catalytic subunit of Moorella thermoacetica (strain ATCC 39073 / JCM 9320).